The following is a 106-amino-acid chain: Iron-sulfur cluster assembly protein CyaY (106 aa).

It belongs to the frataxin family.

Functionally, involved in iron-sulfur (Fe-S) cluster assembly. May act as a regulator of Fe-S biogenesis. The protein is Iron-sulfur cluster assembly protein CyaY of Salmonella paratyphi B (strain ATCC BAA-1250 / SPB7).